We begin with the raw amino-acid sequence, 174 residues long: NADH-quinone oxidoreductase subunit B 2 (174 aa).

Residues Cys-38, Cys-39, Cys-104, and Cys-133 each coordinate [4Fe-4S] cluster.

It belongs to the complex I 20 kDa subunit family. In terms of assembly, NDH-1 is composed of 14 different subunits. Subunits NuoB, C, D, E, F, and G constitute the peripheral sector of the complex. The cofactor is [4Fe-4S] cluster.

The protein localises to the cell membrane. The catalysed reaction is a quinone + NADH + 5 H(+)(in) = a quinol + NAD(+) + 4 H(+)(out). Functionally, NDH-1 shuttles electrons from NADH, via FMN and iron-sulfur (Fe-S) centers, to quinones in the respiratory chain. The immediate electron acceptor for the enzyme in this species is believed to be ubiquinone. Couples the redox reaction to proton translocation (for every two electrons transferred, four hydrogen ions are translocated across the cytoplasmic membrane), and thus conserves the redox energy in a proton gradient. This chain is NADH-quinone oxidoreductase subunit B 2, found in Chloroflexus aurantiacus (strain ATCC 29366 / DSM 635 / J-10-fl).